The following is a 392-amino-acid chain: Probable tRNA sulfurtransferase (392 aa).

A THUMP domain is found at 61–168 (DEALKLLSKV…EFTYIYSEII (108 aa)). Residues 185–186 (LL), 210–211 (HF), Arg-267, Gly-289, and Gln-298 contribute to the ATP site.

It belongs to the ThiI family.

The protein resides in the cytoplasm. It carries out the reaction [ThiI sulfur-carrier protein]-S-sulfanyl-L-cysteine + a uridine in tRNA + 2 reduced [2Fe-2S]-[ferredoxin] + ATP + H(+) = [ThiI sulfur-carrier protein]-L-cysteine + a 4-thiouridine in tRNA + 2 oxidized [2Fe-2S]-[ferredoxin] + AMP + diphosphate. The catalysed reaction is [ThiS sulfur-carrier protein]-C-terminal Gly-Gly-AMP + S-sulfanyl-L-cysteinyl-[cysteine desulfurase] + AH2 = [ThiS sulfur-carrier protein]-C-terminal-Gly-aminoethanethioate + L-cysteinyl-[cysteine desulfurase] + A + AMP + 2 H(+). It participates in cofactor biosynthesis; thiamine diphosphate biosynthesis. Its function is as follows. Catalyzes the ATP-dependent transfer of a sulfur to tRNA to produce 4-thiouridine in position 8 of tRNAs, which functions as a near-UV photosensor. Also catalyzes the transfer of sulfur to the sulfur carrier protein ThiS, forming ThiS-thiocarboxylate. This is a step in the synthesis of thiazole, in the thiamine biosynthesis pathway. The sulfur is donated as persulfide by IscS. This Acetivibrio thermocellus (strain ATCC 27405 / DSM 1237 / JCM 9322 / NBRC 103400 / NCIMB 10682 / NRRL B-4536 / VPI 7372) (Clostridium thermocellum) protein is Probable tRNA sulfurtransferase.